The sequence spans 508 residues: Pyruvate kinase 2 (508 aa).

R50 lines the substrate pocket. 4 residues coordinate K(+): N52, S54, D85, and T86. 52-55 serves as a coordination point for ATP; it reads NFSH. R92 and K178 together coordinate ATP. E243 is a Mg(2+) binding site. 3 residues coordinate substrate: G266, D267, and T299. Position 267 (D267) interacts with Mg(2+).

Belongs to the pyruvate kinase family. Homotetramer. Mg(2+) is required as a cofactor. It depends on K(+) as a cofactor.

It carries out the reaction pyruvate + ATP = phosphoenolpyruvate + ADP + H(+). The protein operates within carbohydrate degradation; glycolysis; pyruvate from D-glyceraldehyde 3-phosphate: step 5/5. This chain is Pyruvate kinase 2 (PYK2), found in Candida glabrata (strain ATCC 2001 / BCRC 20586 / JCM 3761 / NBRC 0622 / NRRL Y-65 / CBS 138) (Yeast).